Consider the following 660-residue polypeptide: Zinc transporter ZIP4 (660 aa).

An N-terminal signal peptide occupies residues methionine 1–alanine 22. At arginine 23–tyrosine 337 the chain is on the extracellular side. Cystine bridges form between cysteine 56–cysteine 61, cysteine 64–cysteine 110, and cysteine 160–cysteine 195. 2 N-linked (GlcNAc...) asparagine glycosylation sites follow: asparagine 192 and asparagine 219. Positions glycine 233–serine 273 are disordered. Basic and acidic residues predominate over residues glycine 236 to threonine 267. N-linked (GlcNAc...) asparagine glycosylation occurs at asparagine 272. Cysteine 280 and cysteine 319 are joined by a disulfide. Residues leucine 338 to leucine 358 form a helical membrane-spanning segment. Residues threonine 359 to serine 376 lie on the Cytoplasmic side of the membrane. The helical transmembrane segment at leucine 377–leucine 397 threads the bilayer. At histidine 398 to arginine 420 the chain is on the extracellular side. The helical transmembrane segment at leucine 421 to leucine 441 threads the bilayer. Topologically, residues leucine 442–tyrosine 511 are cytoplasmic. Residues leucine 465–leucine 467 carry the Essential for SLC39A4 endocytosis motif. The chain crosses the membrane as a helical span at residues leucine 512 to alanine 531. Zn(2+)-binding residues include histidine 520, asparagine 521, and aspartate 524. The Extracellular portion of the chain corresponds to phenylalanine 532 to glycine 539. Residues leucine 540–leucine 566 form a helical membrane-spanning segment. Residues histidine 549, glutamate 550, and histidine 553 each contribute to the Zn(2+) site. Residues serine 567–alanine 571 lie on the Cytoplasmic side of the membrane. The chain crosses the membrane as a helical span at residues leucine 572–valine 592. The Extracellular segment spans residues glycine 593 to glutamate 599. A helical transmembrane segment spans residues alanine 600–proline 620. At alanine 621–proline 630 the chain is on the cytoplasmic side. The chain crosses the membrane as a helical span at residues tryptophan 631–leucine 651. Topologically, residues serine 652–phenylalanine 660 are extracellular. N-linked (GlcNAc...) asparagine glycosylation is present at asparagine 657.

The protein belongs to the ZIP transporter (TC 2.A.5) family. In terms of assembly, homodimer. Homodimerization is mediated by the transmembrane domain. The extracellular N-terminal ectodomain is cleaved when cells are Zn(2+) deficient, N-terminally cleaved SLC39A4 is then internalized faster. In terms of processing, under excess Zn(2+) conditions, SLC39A4 on the cell surface is rapidly endocytosed, ubiquitinated, and degraded. Post-translationally, N-glycosylated. As to expression, highly expressed in the small intestine and embryonic visceral yolk sac. Weakly expressed in the stomach and liver.

It is found in the cell membrane. The protein resides in the recycling endosome membrane. The protein localises to the apical cell membrane. The enzyme catalyses Zn(2+)(in) = Zn(2+)(out). Its function is as follows. Selective transporter that mediates the uptake of Zn(2+). Plays an essential role for dietary zinc uptake from small intestine. The Zn(2+) uniporter activity is regulated by zinc availability. Also exhibits polyspecific binding and transport of Cu(2+), Cd(2+) and possibly Ni(2+) but at higher concentrations. The sequence is that of Zinc transporter ZIP4 (Slc39a4) from Mus musculus (Mouse).